The primary structure comprises 679 residues: Methionine--tRNA ligase (679 aa).

Residues 14-24 carry the 'HIGH' region motif; sequence PYANGSIHLGH. Zn(2+)-binding residues include C145, C148, C158, and C161. A 'KMSKS' region motif is present at residues 331 to 335; the sequence is KMSKS. K334 is an ATP binding site. Residues 577 to 679 enclose the tRNA-binding domain; that stretch reads TFAAVDLRVA…SGAKPGQRIK (103 aa).

The protein belongs to the class-I aminoacyl-tRNA synthetase family. MetG type 1 subfamily. Homodimer. Requires Zn(2+) as cofactor.

The protein resides in the cytoplasm. It carries out the reaction tRNA(Met) + L-methionine + ATP = L-methionyl-tRNA(Met) + AMP + diphosphate. In terms of biological role, is required not only for elongation of protein synthesis but also for the initiation of all mRNA translation through initiator tRNA(fMet) aminoacylation. The chain is Methionine--tRNA ligase from Pseudomonas putida (strain GB-1).